Reading from the N-terminus, the 142-residue chain is Putative pre-16S rRNA nuclease (142 aa).

It belongs to the YqgF nuclease family.

Its subcellular location is the cytoplasm. In terms of biological role, could be a nuclease involved in processing of the 5'-end of pre-16S rRNA. This chain is Putative pre-16S rRNA nuclease, found in Staphylococcus haemolyticus (strain JCSC1435).